A 134-amino-acid polypeptide reads, in one-letter code: Putative pre-16S rRNA nuclease (134 aa).

The protein belongs to the YqgF nuclease family.

The protein localises to the cytoplasm. Its function is as follows. Could be a nuclease involved in processing of the 5'-end of pre-16S rRNA. The protein is Putative pre-16S rRNA nuclease of Hydrogenovibrio crunogenus (strain DSM 25203 / XCL-2) (Thiomicrospira crunogena).